Reading from the N-terminus, the 175-residue chain is Acetyl-CoA decarbonylase/synthase complex subunit epsilon 2 (175 aa).

This sequence belongs to the CdhB family. As to quaternary structure, heterotetramer of two alpha and two epsilon subunits. The ACDS complex is made up of alpha, epsilon, beta, gamma and delta subunits with a probable stoichiometry of (alpha(2)epsilon(2))(4)-beta(8)-(gamma(1)delta(1))(8).

In terms of biological role, part of a complex that catalyzes the reversible cleavage of acetyl-CoA, allowing autotrophic growth from CO(2). The alpha-epsilon subcomponent functions as a carbon monoxide dehydrogenase. The precise role of the epsilon subunit is unclear; it may have a stabilizing role within the alpha(2)epsilon(2) component and/or be involved in electron transfer to FAD during a potential FAD-mediated CO oxidation. The polypeptide is Acetyl-CoA decarbonylase/synthase complex subunit epsilon 2 (cdhB2) (Archaeoglobus fulgidus (strain ATCC 49558 / DSM 4304 / JCM 9628 / NBRC 100126 / VC-16)).